The chain runs to 894 residues: Translation initiation factor IF-2 (894 aa).

The interval 47 to 305 (AHLNRENGSG…GSALQQSFQK (259 aa)) is disordered. The segment covering 68-82 (STLNIPGTGGKSKSV) has biased composition (polar residues). Basic and acidic residues-rich tracts occupy residues 93 to 159 (VKRD…KDKV) and 166 to 219 (DMTK…KWTD). Over residues 254–269 (GRSRNAKAARPAKKGN) the composition is skewed to basic residues. A compositionally biased stretch (basic and acidic residues) spans 270–283 (KHSESKADREEARA). In terms of domain architecture, tr-type G spans 393-562 (PRAPVVTIMG…LLQAEVLELK (170 aa)). The tract at residues 402–409 (GHVDHGKT) is G1. 402 to 409 (GHVDHGKT) is a binding site for GTP. A G2 region spans residues 427-431 (GITQH). Residues 448-451 (DTPG) form a G3 region. Residues 448–452 (DTPGH) and 502–505 (NKID) contribute to the GTP site. The interval 502 to 505 (NKID) is G4. The tract at residues 538–540 (SAK) is G5.

The protein belongs to the TRAFAC class translation factor GTPase superfamily. Classic translation factor GTPase family. IF-2 subfamily.

It localises to the cytoplasm. Functionally, one of the essential components for the initiation of protein synthesis. Protects formylmethionyl-tRNA from spontaneous hydrolysis and promotes its binding to the 30S ribosomal subunits. Also involved in the hydrolysis of GTP during the formation of the 70S ribosomal complex. In Citrobacter koseri (strain ATCC BAA-895 / CDC 4225-83 / SGSC4696), this protein is Translation initiation factor IF-2.